The sequence spans 131 residues: Profilin-6 (131 aa).

The protein belongs to the profilin family. As to quaternary structure, occurs in many kinds of cells as a complex with monomeric actin in a 1:1 ratio.

Its subcellular location is the cytoplasm. It is found in the cytoskeleton. Binds to actin and affects the structure of the cytoskeleton. At high concentrations, profilin prevents the polymerization of actin, whereas it enhances it at low concentrations. By binding to PIP2, it inhibits the formation of IP3 and DG. This is Profilin-6 from Hevea brasiliensis (Para rubber tree).